The primary structure comprises 89 residues: Small ribosomal subunit protein uS15 (89 aa).

The protein belongs to the universal ribosomal protein uS15 family. Part of the 30S ribosomal subunit. Forms a bridge to the 50S subunit in the 70S ribosome, contacting the 23S rRNA.

In terms of biological role, one of the primary rRNA binding proteins, it binds directly to 16S rRNA where it helps nucleate assembly of the platform of the 30S subunit by binding and bridging several RNA helices of the 16S rRNA. Forms an intersubunit bridge (bridge B4) with the 23S rRNA of the 50S subunit in the ribosome. This chain is Small ribosomal subunit protein uS15, found in Vibrio atlanticus (strain LGP32) (Vibrio splendidus (strain Mel32)).